The following is a 456-amino-acid chain: Hydroxymethylglutaryl coenzyme A synthase (456 aa).

Ala34 is a binding site for (3S)-3-hydroxy-3-methylglutaryl-CoA. Glu85 serves as the catalytic Proton donor/acceptor. (3S)-3-hydroxy-3-methylglutaryl-CoA contacts are provided by Cys119, Thr161, Ser211, His258, Lys267, Asn335, and Ser369. Cys119 serves as the catalytic Acyl-thioester intermediate. Residue His258 is the Proton donor/acceptor of the active site.

It belongs to the thiolase-like superfamily. HMG-CoA synthase family.

It catalyses the reaction acetoacetyl-CoA + acetyl-CoA + H2O = (3S)-3-hydroxy-3-methylglutaryl-CoA + CoA + H(+). In terms of biological role, HMG-CoA synthase; part of the gene cluster that mediates the biosynthesis of 1233A, a natural compound known as an inhibitor of HMG-CoA synthase in the mevalonate pathway and with antibacterial and antifungal activities. This enzyme condenses acetyl-CoA with acetoacetyl-CoA to form HMG-CoA, which is the substrate for HMG-CoA reductase. As part of the 1233A biosynthesis cluster, is involved in conferring self-resistance to 1233A. This is Hydroxymethylglutaryl coenzyme A synthase from Fusarium sp.